A 180-amino-acid chain; its full sequence is Anaerobic nitrite reductase GLB0 (180 aa).

Residues 23-172 enclose the Globin domain; the sequence is TYSKENEQLV…LAEQVKAEMH (150 aa). The Homodimerization motif lies at 56–60; it reads EIAPG. Heme b is bound by residues serine 66, lysine 80, histidine 84, lysine 114, threonine 118, and histidine 119. Positions 126 to 138 match the Homodimerization motif; that stretch reads DDQFEIVKEAILY.

It belongs to the plant globin family. Homodimer. Heme b serves as cofactor.

Its subcellular location is the cytoplasm. It localises to the nucleus. It carries out the reaction Fe(III)-heme b-[protein] + nitric oxide + H2O = Fe(II)-heme b-[protein] + nitrite + 2 H(+). Its function is as follows. Phytoglobin that reduces nitrite to nitric oxide (NO) under anoxic conditions (e.g. during flooding or in waterlogged soil). May not function as an oxygen storage or transport protein. Has an unusually high affinity for O(2) through an hexacoordinate heme iron because of a very low dissociation constant. The polypeptide is Anaerobic nitrite reductase GLB0 (Physcomitrium patens (Spreading-leaved earth moss)).